Reading from the N-terminus, the 353-residue chain is Chorismate synthase (353 aa).

NADP(+) is bound by residues Arg48 and Arg54. FMN is bound by residues 125-127 (RSS), 238-239 (NA), Gly278, 293-297 (KPTSS), and Arg319.

Belongs to the chorismate synthase family. As to quaternary structure, homotetramer. FMNH2 serves as cofactor.

The enzyme catalyses 5-O-(1-carboxyvinyl)-3-phosphoshikimate = chorismate + phosphate. The protein operates within metabolic intermediate biosynthesis; chorismate biosynthesis; chorismate from D-erythrose 4-phosphate and phosphoenolpyruvate: step 7/7. In terms of biological role, catalyzes the anti-1,4-elimination of the C-3 phosphate and the C-6 proR hydrogen from 5-enolpyruvylshikimate-3-phosphate (EPSP) to yield chorismate, which is the branch point compound that serves as the starting substrate for the three terminal pathways of aromatic amino acid biosynthesis. This reaction introduces a second double bond into the aromatic ring system. The protein is Chorismate synthase of Bordetella bronchiseptica (strain ATCC BAA-588 / NCTC 13252 / RB50) (Alcaligenes bronchisepticus).